The chain runs to 911 residues: Inositol 1,4,5-triphosphate receptor associated 1 (911 aa).

Over residues 1–11 (MVKAPQSEERL) the composition is skewed to basic and acidic residues. 4 disordered regions span residues 1–21 (MVKA…NNSV), 39–122 (EVPG…HRHL), 174–405 (LTRR…GPRL), and 478–498 (EQEK…ESKG). Positions 68 to 86 (AAQSPAGQDPATTGISCSP) are enriched in polar residues. Residues 111–122 (HSPHRRLSHRHL) are compositionally biased toward basic residues. At Ser118 the chain carries Phosphoserine. Residues 152 to 184 (SEEDKKKNLALLEEAKLVSERFLTRRGRKSRSS) are interaction with PRKG1. Residues 183 to 212 (SSPGESSPAVSPNLSPGASPASSQSNSLTV) show a composition bias toward polar residues. The span at 277 to 292 (TVEKSKEITIEQKENF) shows a compositional bias: basic and acidic residues. At Ser393 the chain carries Phosphoserine. Residues 534-580 (NVFVQLSLAFRNDSYTLESRINQAERERNLTEENTEKELENFKASIT) are interaction with ITPR1. The stretch at 547–645 (SYTLESRINQ…MQYVENLKRT (99 aa)) forms a coiled coil. Residues Ser683 and Ser696 each carry the phosphoserine modification. Disordered stretches follow at residues 706-766 (LNLP…TPSC) and 787-829 (YQEG…KEQR). Low complexity predominate over residues 708 to 728 (LPGQSPSSSPIPSLPALSESS). Positions 790–801 (GLKKTKELQGLR) are enriched in basic and acidic residues. The segment covering 802 to 825 (EEEEEQKSESPEEPEEVAETEEEE) has biased composition (acidic residues). The chain crosses the membrane as a helical span at residues 853–873 (VIWMMAAAMLVLTVVLGLYGS).

In terms of assembly, interacts with PRKG1/cGKI-beta and ITPR1/IP3R type I. Part of cGMP kinase signaling complex at least composed of ACTA2/alpha-actin, CNN1/calponin H1, PLN/phospholamban, PRKG1 and ITPR1. Interacts with HCN4; regulates HCN4 channel activity. Phosphorylated by PRKG1/cGKI-beta. Phosphorylation at Ser-696 is necessary for PRKG1-induced calcium release in the cytosol. In terms of tissue distribution, highly expressed in trachea, aorta and uterus.

Its subcellular location is the sarcoplasmic reticulum. It localises to the cytoplasm. It is found in the perinuclear region. The protein resides in the membrane. Its function is as follows. Plays a role as NO/PRKG1-dependent regulator of IP3-induced calcium release; its phosphorylation by PRKG1 inhibits bradykinin and IP3-induced calcium release from intracellular stores. Recruits PRKG1 to the endoplasmic reticulum and may mediate the assembly of PRKG1 and ITPR1 in a macrocomplex. Involved in PRKG1 signaling cascade leading to inhibition of platelet activation and aggregation. Also mediates NO-dependent inhibition of calcium signaling in gastrointestinal smooth muscle contributing to NO-dependent relaxation. Plays a role in the regulation of cellular excitability by regulating the hyperpolarization-activated cyclic nucleotide-gated HCN4 channel activity. This chain is Inositol 1,4,5-triphosphate receptor associated 1 (IRAG1), found in Bos taurus (Bovine).